A 127-amino-acid polypeptide reads, in one-letter code: Fluoride-specific ion channel FluC 1 (127 aa).

4 consecutive transmembrane segments (helical) span residues 4 to 24 (TLLA…LVSL), 35 to 55 (VGTL…LAFF), 71 to 91 (TGFC…VYLI), and 101 to 121 (GTIL…FILV). Residues glycine 75 and threonine 78 each coordinate Na(+).

This sequence belongs to the fluoride channel Fluc/FEX (TC 1.A.43) family.

Its subcellular location is the cell inner membrane. The enzyme catalyses fluoride(in) = fluoride(out). Na(+) is not transported, but it plays an essential structural role and its presence is essential for fluoride channel function. In terms of biological role, fluoride-specific ion channel. Important for reducing fluoride concentration in the cell, thus reducing its toxicity. This chain is Fluoride-specific ion channel FluC 1, found in Yersinia pestis.